The following is a 311-amino-acid chain: Dehydrogenase/reductase SDR family member 7C (311 aa).

The first 18 residues, 1–18, serve as a signal peptide directing secretion; the sequence is MGIMAVLMLPLLLLGVSG. The NAD(+) site is built by Ser-47, Leu-49, Tyr-191, Lys-195, and Ser-226. Tyr-191 acts as the Proton acceptor in catalysis.

It belongs to the short-chain dehydrogenases/reductases (SDR) family. In terms of tissue distribution, expressed in skeletal muscle, cardiac muscle and skin.

It is found in the sarcoplasmic reticulum membrane. It carries out the reaction all-trans-retinol + NAD(+) = all-trans-retinal + NADH + H(+). NADH-dependent oxidoreductase which catalyzes the oxidation of all-trans-retinol to all-trans-retinal. Plays a role in the regulation of cardiac and skeletal muscle metabolic functions. Maintains Ca(2+) intracellular homeostasis by repressing Ca(2+) release from the sarcoplasmic reticulum (SR) in myotubes, possibly through local alternations in NAD/NADH or retinol/retinal. Also plays a role in Ca(2+) homeostasis by controlling Ca(2+) overload in the cytosol and the SR in myotubes. Involved in glucose uptake into skeletal muscles and muscle performance by activating PI3K and mTORC2-mediated AKT1 phosphorylation signaling pathways, possibly through the action of its downstream catalytic product all-trans-retinoic acid. This is Dehydrogenase/reductase SDR family member 7C from Rattus norvegicus (Rat).